A 161-amino-acid chain; its full sequence is Putative defense protein 2 (161 aa).

Positions 1–11 are cleaved as a signal peptide; that stretch reads LSWSALALTSA. The region spanning 12-161 is the Reelin domain; that stretch reads YPTGAPTSAC…SAPVKILSHH (150 aa). Residues Cys21 and Cys98 are joined by a disulfide bond. N-linked (GlcNAc...) asparagine glycosylation is present at Asn91.

It belongs to the insect defense protein family.

It is found in the secreted. In terms of biological role, may have antimicrobial activity. This is Putative defense protein 2 from Antheraea mylitta (Tasar silkworm).